A 103-amino-acid chain; its full sequence is Cell division protein FtsB (103 aa).

Residues 1 to 3 are Cytoplasmic-facing; sequence MGK. The chain crosses the membrane as a helical span at residues 4–21; sequence LTLLLLAILVWLQYSLWF. Over 22-103 the chain is Periplasmic; it reads GKNGIHDYTR…RAQSAGQNNR (82 aa). Residues 28-71 are a coiled coil; the sequence is DYTRVNDDVAALQATNAKLKARNDQLFAEIDDLNGGQEALEERA.

It belongs to the FtsB family. As to quaternary structure, part of a complex composed of FtsB, FtsL and FtsQ.

Its subcellular location is the cell inner membrane. Its function is as follows. Essential cell division protein. May link together the upstream cell division proteins, which are predominantly cytoplasmic, with the downstream cell division proteins, which are predominantly periplasmic. This Shigella flexneri serotype 5b (strain 8401) protein is Cell division protein FtsB.